Here is a 126-residue protein sequence, read N- to C-terminus: 5-hydroxyisourate hydrolase (126 aa).

Positions 16, 54, and 123 each coordinate substrate.

It belongs to the transthyretin family. 5-hydroxyisourate hydrolase subfamily. As to quaternary structure, homotetramer.

It catalyses the reaction 5-hydroxyisourate + H2O = 5-hydroxy-2-oxo-4-ureido-2,5-dihydro-1H-imidazole-5-carboxylate + H(+). In terms of biological role, catalyzes the hydrolysis of 5-hydroxyisourate (HIU) to 2-oxo-4-hydroxy-4-carboxy-5-ureidoimidazoline (OHCU). This is 5-hydroxyisourate hydrolase from Pseudomonas aeruginosa (strain ATCC 15692 / DSM 22644 / CIP 104116 / JCM 14847 / LMG 12228 / 1C / PRS 101 / PAO1).